The primary structure comprises 127 residues: Interacting with cytoskeleton protein 1 (127 aa).

Its subcellular location is the vacuole membrane. Required for viability of cells lacking mtDNA. The protein is Interacting with cytoskeleton protein 1 (ICY1) of Saccharomyces cerevisiae (strain ATCC 204508 / S288c) (Baker's yeast).